Here is an 807-residue protein sequence, read N- to C-terminus: MPASEDRRGKWKRKKRGGLSAARKPKQEEEDMEEEDEENNNNNNEEMDDVENADELQQNGGATPDPGLGIGEVVEDSGSRISDFPAVVKRVVIRPHASVMAVVAAERAGLIGETRGQGSLPALENISFGQLQALSTVPADSLDLERSDGSSSAYVISPPPIMDGEGVVKRFGDLVHVLPMHSDWFAPNTVDRLERQVVPQFFSGKSPNHTPESYMEFRNAIVSKYVENPEKTLTISDCQGLVDGVDIEDFARVFRFLDHWGIINYCATAQSHPGPLRDVSDVREDTNGEVNVPSAALTSIDSLIKFDKPNCRHKGGEVYSSLPSLDGDSPDLDIRIREHLCDSHCNHCSRPLPTVYFQSQKKGDILLCCDCFHHGRFVVGHSCLDFVRVDPMKFYGDQDGDNWTDQETLLLLEAVELYNENWVQIADHVGSKSKAQCILHFLRLPVEDGLLDNVEVSGVTNTENPTNGYDHKGTDSNGDLPGYSEQGSDTEIKLPFVKSPNPVMALVAFLASAVGPRVAASCAHESLSVLSEDDRMKSEGMQGKEASLLDGENQQQDGAHKTSSQNGAEAQTPLPQDKVMAAFRAGLSAAATKAKLFADHEEREIQRLSANIVNHQLKRMELKLKQFAEIETLLMKECEQVEKTRQRFSAERARMLSARFGSPGGISPQTNNLQGMSLSTGGNNINSLMHQQHQQQQASATSQPSIIPGFSNNPQVQAQMHFMARQQQQQQQQQQQQQQAFSFGPRLPLNAIQTNAGSTASPNVMFGNNQLNNPAAAGAASINQPSFSHPMVRSSTGSGSGSGLGLN.

Residues Met1–Val74 form a disordered region. The segment covering Glu28–Asp54 has biased composition (acidic residues). One can recognise an SWIRM domain in the interval His176–Gly274. The ZZ-type; degenerate zinc-finger motif lies at Leu340–Phe394. Residues Cys345, Cys348, Cys368, and Cys371 each coordinate Zn(2+). Residues Gln398–Gly449 enclose the SANT domain. Polar residues-rich tracts occupy residues Gly458–Asn467 and Glu552–Glu569. Disordered regions lie at residues Gly458–Gly487 and Leu549–Gln571. A coiled-coil region spans residues Ala598–Leu656. Composition is skewed to low complexity over residues Gln692–Gln703 and Gln726–Gln739. 3 disordered regions span residues Gln692–Asn713, His721–Ala740, and Ser781–Asn807. Residues Ser798 to Asn807 are compositionally biased toward gly residues.

Heterodimer. Interacts with SWI3A, SWI3B and BRM, but not with BSH. Interacts with MORC6 and SUVH9. As to expression, expressed in roots, stems, leaves, flowers and siliques.

The protein resides in the nucleus. Component of a multiprotein complex equivalent of the SWI/SNF complex, an ATP-dependent chromatin-remodeling complex, which is required for the positive and negative regulation of gene expression of a large number of genes. It changes chromatin structure by altering DNA-histone contacts within a nucleosome, leading eventually to a change in nucleosome position, thus facilitating or repressing binding of gene-specific transcription factors. In Arabidopsis thaliana (Mouse-ear cress), this protein is SWI/SNF complex subunit SWI3C (SWI3C).